The chain runs to 199 residues: UPF0301 protein Rfer_1377 (199 aa).

It belongs to the UPF0301 (AlgH) family.

In Albidiferax ferrireducens (strain ATCC BAA-621 / DSM 15236 / T118) (Rhodoferax ferrireducens), this protein is UPF0301 protein Rfer_1377.